The following is a 458-amino-acid chain: MARGPQTLVQVWVGGQLFQADRALLVEHCGFFRGLFRSGMRETRAAEVRLGVLSAGGFRATLQVLRGDRPALAAEDELLQAVECAAFLQAPALARFLEHNLTSDNCALLCDAAAAFGLRDVFHSAALFICDGERELAAELALPEARAYVAALRPSSYAAVSTHTPAPGFLEDASRTLCYLDEEEDAWRTLAALPLEASTLLAGVATLGNKLYIVGGVRGASKEVVELGFCYDPDGGTWHEFPSPHQPRYDTALAGFDGRLYAIGGEFQRTPISSVERYDPAAGCWSFVADLPQPAAGVPCAQACGRLFVCLWRPADTTAVVEYAVRTDAWLPVAELRRPQSYGHCMVAHRDSLYVVRNGPSDDFLHCAIDCLNLATGQWTALPGQFVNSKGALFTAVVRGDTVYTVNRMFTLLYAIEGGTWRLLREKAGFPRPGSLQTFLLRLPPGAPGPVTSTTAEL.

The region spanning T7–A74 is the BTB domain. Kelch repeat units lie at residues A159–N209, K210–G258, R259–G305, L307–R350, and S352–G400.

Component of the BCR(KBTBD13) E3 ubiquitin ligase complex, at least composed of CUL3 and KBTBD13 and RBX1. Interacts with CUL3. Post-translationally, autoubiquitinated. Expressed in skeletal muscle.

The protein resides in the cytoplasm. The protein operates within protein modification; protein ubiquitination. Substrate-specific adapter of a BCR (BTB-CUL3-RBX1) E3 ubiquitin ligase complex. In Homo sapiens (Human), this protein is Kelch repeat and BTB domain-containing protein 13 (KBTBD13).